Reading from the N-terminus, the 1336-residue chain is DNA-directed RNA polymerase subunit beta' (1336 aa).

Zn(2+) contacts are provided by C60, C62, C75, and C78. D535, D537, and D539 together coordinate Mg(2+). Positions 902, 984, 991, and 994 each coordinate Zn(2+).

Belongs to the RNA polymerase beta' chain family. As to quaternary structure, the RNAP catalytic core consists of 2 alpha, 1 beta, 1 beta' and 1 omega subunit. When a sigma factor is associated with the core the holoenzyme is formed, which can initiate transcription. Mg(2+) is required as a cofactor. Zn(2+) serves as cofactor.

It carries out the reaction RNA(n) + a ribonucleoside 5'-triphosphate = RNA(n+1) + diphosphate. Its function is as follows. DNA-dependent RNA polymerase catalyzes the transcription of DNA into RNA using the four ribonucleoside triphosphates as substrates. The chain is DNA-directed RNA polymerase subunit beta' from Corynebacterium diphtheriae (strain ATCC 700971 / NCTC 13129 / Biotype gravis).